The chain runs to 217 residues: Cytidylate kinase (217 aa).

Position 10–18 (10–18) interacts with ATP; that stretch reads GPAGAGKST.

This sequence belongs to the cytidylate kinase family. Type 1 subfamily.

The protein localises to the cytoplasm. The enzyme catalyses CMP + ATP = CDP + ADP. It carries out the reaction dCMP + ATP = dCDP + ADP. The polypeptide is Cytidylate kinase (Clostridium botulinum (strain Loch Maree / Type A3)).